Reading from the N-terminus, the 532-residue chain is uncharacterized protein (532 aa).

Helical transmembrane passes span 11-31 (YLSH…ALII), 51-71 (IEPF…KIFF), 126-146 (LIDI…YTLW), 147-167 (ILYN…IIVF), and 231-253 (YVES…VLLI). The ABC transporter domain occupies 315–531 (ICINKLVYEY…MIIPMNNGII (217 aa)). Position 349 to 356 (349 to 356 (GKSGSGKS)) interacts with ATP.

It is found in the membrane. This is an uncharacterized protein from Acanthamoeba polyphaga mimivirus (APMV).